The following is a 266-amino-acid chain: Probable BRI1 kinase inhibitor 1 (266 aa).

Disordered regions lie at residues 1 to 144 (MTMN…AKTR) and 167 to 242 (FSRH…SEES). Positions 9 to 30 (RSQPPPPHPPLFKPTTPPPPPL) are enriched in pro residues. The span at 31-40 (LSTSTSTSPP) shows a compositional bias: low complexity. The span at 77 to 93 (LSHNNYSSKANQHRQTG) shows a compositional bias: polar residues. The span at 100 to 109 (SKEKDREYKA) shows a compositional bias: basic and acidic residues. Composition is skewed to low complexity over residues 210 to 221 (LSSAPASLRASP) and 229 to 241 (VGGSVKVSTSSEE).

In terms of biological role, negative regulator of brassinosteroid signaling. The polypeptide is Probable BRI1 kinase inhibitor 1 (BKI1) (Oryza sativa subsp. indica (Rice)).